The following is a 147-amino-acid chain: MSLSAAEADLAGKSWAPVFANKDANGDAFLVALFEKFPDSANFFADFKGKSVADIKASPKLRDVSSRIFTRLNEFVNNAADAGKMSAMLSQFAKEHVGFGVGSAQFENVRSMFPGFVASVAAPPAGADAAWTKLFGLIIDALKAAGK.

At Ser-2 the chain carries N-acetylserine. The Globin domain occupies 2 to 147 (SLSAAEADLA…IIDALKAAGK (146 aa)). His-96 is a binding site for heme b.

It belongs to the globin family. As to quaternary structure, monomer.

The chain is Globin from Aplysia limacina (Sea hare).